A 360-amino-acid chain; its full sequence is POU domain, class 5, transcription factor 1 (360 aa).

Disordered stretches follow at residues 1–51 and 88–114; these read MAGH…GPGV and GGLETSQPEGEAGVGVESNSDGASPEP. Positions 4–12 match the 9aaTAD motif; sequence HLTSDFAFS. Ser111 is subject to Phosphoserine; by MAPK. Residue Lys123 forms a Glycyl lysine isopeptide (Lys-Gly) (interchain with G-Cter in SUMO) linkage. The region spanning 138–212 is the POU-specific domain; sequence DIKALQKELE…LLQKWVEEAD (75 aa). Residues Arg157 and Gln164 each coordinate DNA. 2 DNA-binding regions span residues 180–186 and 193–196; these read SQTTICR and SFKN. The segment at residues 230 to 289 is a DNA-binding region (homeobox); it reads RKRKRTSIENRVRGNLENLFLQCPKPTLQQISHIAQQLGLEKDVVRVWFCNRRQKGKRSS. At Thr235 the chain carries Phosphothreonine. Residues Ser236, Ser289, Ser290, and Ser355 each carry the phosphoserine modification.

This sequence belongs to the POU transcription factor family. Class-5 subfamily. As to quaternary structure, interacts with PKM. Interacts with WWP2. Interacts with UBE2I and ZSCAN10. Interacts with PCGF1. Interacts with ESRRB; recruits ESRRB near the POU5F1-SOX2 element in the NANOG proximal promoter; the interaction is DNA independent. Interacts with ZNF322. Interacts with MAPK8 and MAPK9; the interaction allows MAPK8 and MAPK9 to phosphorylate POU5F1 on Ser-355. Interacts (when phosphorylated on Ser-355) with FBXW8. Interacts with FBXW4. Interacts with SOX2 and SOX15; binds synergistically with either SOX2 or SOX15 to DNA. Interacts with DDX56. In terms of processing, sumoylation enhances the protein stability, DNA binding and transactivation activity. Sumoylation is required for enhanced YES1 expression. Post-translationally, ubiquitinated; undergoes 'Lys-63'-linked polyubiquitination by WWP2 leading to proteasomal degradation. ERK1/2-mediated phosphorylation at Ser-111 promotes nuclear exclusion and proteasomal degradation. Phosphorylation at Thr-235 and Ser-236 decrease DNA-binding and alters ability to activate transcription.

It localises to the cytoplasm. The protein resides in the nucleus. Functionally, transcription factor that binds to the octamer motif (5'-ATTTGCAT-3'). Forms a trimeric complex with SOX2 or SOX15 on DNA and controls the expression of a number of genes involved in embryonic development such as YES1, FGF4, UTF1 and ZFP206. Critical for early embryogenesis and for embryonic stem cell pluripotency. In Pan troglodytes (Chimpanzee), this protein is POU domain, class 5, transcription factor 1 (POU5F1).